The sequence spans 389 residues: E3 ubiquitin-protein ligase E3D (389 aa).

Alanine 2 carries the N-acetylalanine modification. Residues 129–159 carry the BRAT1-like motif motif; sequence PLPGDNWGALVDEWCCHPDPFANKPLHPREN. Zn(2+) is bound at residue cysteine 144. Residues 235-257 form an interaction with UBE2C region; the sequence is LPSERNFPIIPRSQFVQSVLAQC. Positions 353–389 are HECT-like; that stretch reads LPSTTCLELLLILSKSNATLPPSLRCMNSFQVAFLKM.

In terms of assembly, interacts with UBE2C/UbcH10 (E2 ubiquitin-conjugating enzyme). In vitro, interacts with cyclin-B. Ubiquitinated by UBCH10 (E2 ubiquitin-conjugating enzyme).

Its subcellular location is the cytoplasm. The enzyme catalyses S-ubiquitinyl-[E2 ubiquitin-conjugating enzyme]-L-cysteine + [acceptor protein]-L-lysine = [E2 ubiquitin-conjugating enzyme]-L-cysteine + N(6)-ubiquitinyl-[acceptor protein]-L-lysine.. Its pathway is protein modification; protein ubiquitination. In terms of biological role, E3 ubiquitin-protein ligase which accepts ubiquitin from specific E2 ubiquitin-conjugating enzymes, and transfers it to substrates, generally promoting their degradation by the proteasome. Independently of its E3 ubiquitin-protein ligase activity, acts as an inhibitor of CPSF3 endonuclease activity by blocking CPSF3 active site. The polypeptide is E3 ubiquitin-protein ligase E3D (UBE3D) (Bos taurus (Bovine)).